The following is a 1419-amino-acid chain: DNA-directed RNA polymerase subunit beta' (1419 aa).

Residues cysteine 71, cysteine 73, cysteine 86, and cysteine 89 each contribute to the Zn(2+) site. Mg(2+)-binding residues include aspartate 461, aspartate 463, and aspartate 465. Zn(2+) is bound by residues cysteine 815, cysteine 889, cysteine 896, and cysteine 899.

Belongs to the RNA polymerase beta' chain family. The RNAP catalytic core consists of 2 alpha, 1 beta, 1 beta' and 1 omega subunit. When a sigma factor is associated with the core the holoenzyme is formed, which can initiate transcription. Mg(2+) serves as cofactor. It depends on Zn(2+) as a cofactor.

The enzyme catalyses RNA(n) + a ribonucleoside 5'-triphosphate = RNA(n+1) + diphosphate. Its function is as follows. DNA-dependent RNA polymerase catalyzes the transcription of DNA into RNA using the four ribonucleoside triphosphates as substrates. This Actinobacillus succinogenes (strain ATCC 55618 / DSM 22257 / CCUG 43843 / 130Z) protein is DNA-directed RNA polymerase subunit beta'.